Reading from the N-terminus, the 81-residue chain is ATP synthase subunit c, chloroplastic (81 aa).

2 helical membrane-spanning segments follow: residues 3–23 and 57–77; these read PLIP…ASIG and LAFM…LLFA.

This sequence belongs to the ATPase C chain family. F-type ATPases have 2 components, F(1) - the catalytic core - and F(0) - the membrane proton channel. F(1) has five subunits: alpha(3), beta(3), gamma(1), delta(1), epsilon(1). F(0) has four main subunits: a(1), b(1), b'(1) and c(10-14). The alpha and beta chains form an alternating ring which encloses part of the gamma chain. F(1) is attached to F(0) by a central stalk formed by the gamma and epsilon chains, while a peripheral stalk is formed by the delta, b and b' chains.

It localises to the plastid. The protein resides in the chloroplast thylakoid membrane. In terms of biological role, f(1)F(0) ATP synthase produces ATP from ADP in the presence of a proton or sodium gradient. F-type ATPases consist of two structural domains, F(1) containing the extramembraneous catalytic core and F(0) containing the membrane proton channel, linked together by a central stalk and a peripheral stalk. During catalysis, ATP synthesis in the catalytic domain of F(1) is coupled via a rotary mechanism of the central stalk subunits to proton translocation. Key component of the F(0) channel; it plays a direct role in translocation across the membrane. A homomeric c-ring of between 10-14 subunits forms the central stalk rotor element with the F(1) delta and epsilon subunits. The sequence is that of ATP synthase subunit c, chloroplastic from Cycas taitungensis (Prince sago).